We begin with the raw amino-acid sequence, 257 residues long: Phosphate import ATP-binding protein PstB (257 aa).

The 242-residue stretch at 11-252 (LEVRDLNFFY…PQKKATEDYI (242 aa)) folds into the ABC transporter domain. An ATP-binding site is contributed by 43 to 50 (GPSGCGKS).

This sequence belongs to the ABC transporter superfamily. Phosphate importer (TC 3.A.1.7) family. As to quaternary structure, the complex is composed of two ATP-binding proteins (PstB), two transmembrane proteins (PstC and PstA) and a solute-binding protein (PstS).

Its subcellular location is the cell inner membrane. The enzyme catalyses phosphate(out) + ATP + H2O = ADP + 2 phosphate(in) + H(+). Part of the ABC transporter complex PstSACB involved in phosphate import. Responsible for energy coupling to the transport system. The polypeptide is Phosphate import ATP-binding protein PstB (Chromobacterium violaceum (strain ATCC 12472 / DSM 30191 / JCM 1249 / CCUG 213 / NBRC 12614 / NCIMB 9131 / NCTC 9757 / MK)).